The sequence spans 384 residues: MSHLFPTYAKWDVTITSGKGTKLYDNQGNEYLDFVSGIAVCNLGHCHPKVVAAVEEQLHSFWHVSNLFHIPIQENVAALLTEQSGMDAVFFCNSGAEANEAAIKLARKATGKHEIVTFTQSFHGRTLGTMSATGQDKIKTGFGPMLETFHHVPFNDIAALKQVVNEQTAAIVLEVIQGEGGVNLIDPEFAASVNHVCQEHGILLIIDEIQTGIGRTGTAFAFQQYELTPDIITVAKGLGNGFPVGAMLGKQHLIDAFSAGSHGSTFGGNPLAMAAAQAVLTEVFQPNFLQAVQEKGKQLLSGLNEALSGLEIVKEIRGNGLLVGIELQEEGAPFIKQLREKGLLVLNAGPNVIRLLPPLVVTSEELHEAVTQLKEVLDQASVHA.

Pyridoxal 5'-phosphate is bound by residues 95–96 and F122; that span reads GA. Residue R125 coordinates N(2)-acetyl-L-ornithine. Residue 207-210 participates in pyridoxal 5'-phosphate binding; the sequence is DEIQ. K236 is modified (N6-(pyridoxal phosphate)lysine). S264 contributes to the N(2)-acetyl-L-ornithine binding site. T265 contacts pyridoxal 5'-phosphate.

Belongs to the class-III pyridoxal-phosphate-dependent aminotransferase family. ArgD subfamily. Homodimer. Pyridoxal 5'-phosphate serves as cofactor.

It is found in the cytoplasm. The enzyme catalyses N(2)-acetyl-L-ornithine + 2-oxoglutarate = N-acetyl-L-glutamate 5-semialdehyde + L-glutamate. It functions in the pathway amino-acid biosynthesis; L-arginine biosynthesis; N(2)-acetyl-L-ornithine from L-glutamate: step 4/4. This Halalkalibacterium halodurans (strain ATCC BAA-125 / DSM 18197 / FERM 7344 / JCM 9153 / C-125) (Bacillus halodurans) protein is Acetylornithine aminotransferase.